A 199-amino-acid polypeptide reads, in one-letter code: Pre T-cell antigen receptor alpha (199 aa).

The first 16 residues, 1 to 16 (MARTWLLLFLGLRCQA), serve as a signal peptide directing secretion. Residues 17–155 (LPSGIAGTPF…RQVLRLSVLR (139 aa)) lie on the Extracellular side of the membrane. Cysteine 47 and cysteine 107 are oxidised to a cystine. N-linked (GlcNAc...) asparagine glycosylation is found at asparagine 67 and asparagine 117. Residues 117–139 (NRSTHPLQLSGEEASTDRTCPQE) form a disordered region. Residues 156–176 (LLLFKLLLLDVFLTCSRLCVL) form a helical membrane-spanning segment. Topologically, residues 177-199 (AGQHLLPPPSSKQAPASTHQSWT) are cytoplasmic.

As to quaternary structure, heterodimer with TCRB; disulfide linked. This heterodimer assembles with CD3 proteins into a signaling-competent pre-T-cell receptor complex. Interacts with RHBDD1. In terms of tissue distribution, found in CD45+ but not in the CD45- fetal liver cells.

It is found in the membrane. The protein localises to the cell membrane. Functionally, component of the pre-T-cell receptor complex (composed of PTCRA, TCRB and the CD3 complex) that has a crucial role in early T-cell development, particularly alpha-beta T cell differentiation. This chain is Pre T-cell antigen receptor alpha, found in Rattus norvegicus (Rat).